Here is a 1356-residue protein sequence, read N- to C-terminus: MSETNVDSLGDRNDIYSQIFGVERRPDSFATFDSDSHGDISSQLLPNRIENIQNLNVLLSEDIANDIIIAKQRRRSGVEAAIDDSDIPNNEMKGKSSNYILSQQTNIKEVPDTQSLSSADNTPVSSPKKARDATSSHPIVHAKSMSHIYSTSNSASRQAKHYNDHPLPPMSPRNEVYQKNKSTTAFVPKRKPSLPQLALAGLKKQSSFSTGSASTTPTQARKSPLQGFGFFSRPSSKDLHEQHQHHQHIQHNNINNHNNNNTNNNGAHYQVGSSNSNYPQHSHSISSRSMSLNSSTLKNIASSFQSKTSNSRKATQKYDITSNPFSDPHHHHHHHHSSNSHSSLNNVHGSGNSSSVMGSSSNIGLGLKTRVSSTSLALKRYTSVSGTSLSSPRRSSMTPLSASRPVMSASSKKPQVYPALLSRVATKFKSSIQLGEHKKDGLVYRDAFTGQQAVDVICAIIRTSDRNLALLFGRSLDAQKLFHDVVYEHRLRDSPHEVYEFTDNSRFTGTGSTNAHDPLMLLPNSSSFNSGNHSYPNSGMVPSSSTSSLNSDQATLTGSRLHMSSSLSQQKNPAAIHNVNGVFTLLAECYSPTCTRDALCYSISCPRRLEQQARLNLKPNGGLKRNISMALDDDDEEKPSWTSSVSKEDWENLPKKEIKRQEAIYEVYITEKNFVKSLEITRDTFMKTLAETNIISADIRKNFIKHVFAHINDIYSVNRRFLKALTDRQRSSPVVRGIGDIVLRFIPFFEPFVSYVASRPYAKYLIETQRSVNPYFARFDDDMMSSSLRHGIDSFLSQGVSRPGRYMLLVKEIMKSTDPEKDKSDYEDLSKAMDALRDFMKRIDQASGAAQDRHDVKLLKQKILFKNEYVNLGLNDERRKIKHEGILSRKELSKSDGTVVGDIQFYLLDNMLLFLKAKAVNKWHQHKVFQRPIPLPLLFACPGEDMPALRKYIGDHPDCSGTVIQPEYNTSNPKNAITFLYYGAKQRYQVTLYAAQYAGLQTLLEKIKQGQAAIISKTEMFNVTKMSDRFFDYTNKINSVTSCDGGRKLLIATNSGLYMSNIKRQQNKDHRHKSSAFFSTPIQLVQRNNITQIAVLEEFKSIILLIDKKLYSCPLSLIEAEGNGTSFFKKHHKELINHVSFFAEGDCNGKRLIVTAHSSSHSIKYFEHEHPLLAEKNGSGSGNKKSLKKKITEVIFDSEPVSISFLKANLCIGCKKGFQIVSISQNAHESLLDPADTSLEFALRDTLKPMAIYRVGNMFLLCYTEFAFFVNNQGWRKKESHIIHWEGEPQKFAIWYPYILAFDSNFIEIRKIETGELIRCVLADKIRLLQTSTQEILYCYEDYRGYDTVASLDFWG.

Residue Ser2 is modified to N-acetylserine. Disordered regions lie at residues 74–94 (RRSGVEAAIDDSDIPNNEMKG) and 109–175 (EVPD…PRNE). Phosphoserine is present on Ser76. Polar residues-rich tracts occupy residues 109-125 (EVPDTQSLSSADNTPVS) and 147-157 (HIYSTSNSASR). Position 193 is a phosphoserine (Ser193). Disordered stretches follow at residues 202-291 (LKKQ…RSMS), 303-362 (SFQS…SSSN), 383-409 (SVSGTSLSSPRRSSMTPLSASRPVMSA), 531-571 (GNHS…SQQK), and 626-645 (NISMALDDDDEEKPSWTSSV). The segment covering 204–221 (KQSSFSTGSASTTPTQAR) has biased composition (polar residues). The residue at position 223 (Ser223) is a Phosphoserine. Residues 235–244 (SSKDLHEQHQ) are compositionally biased toward basic and acidic residues. Low complexity predominate over residues 250–265 (QHNNINNHNNNNTNNN). Positions 271–281 (VGSSNSNYPQH) are enriched in polar residues. A compositionally biased stretch (low complexity) spans 282-291 (SHSISSRSMS). Polar residues predominate over residues 303 to 325 (SFQSKTSNSRKATQKYDITSNPF). Positions 329–338 (HHHHHHHHSS) are enriched in basic residues. 2 stretches are compositionally biased toward low complexity: residues 339–362 (NSHSSLNNVHGSGNSSSVMGSSSN) and 383–401 (SVSGTSLSSPRRSSMTPLS). Phosphoserine occurs at positions 566 and 628. Positions 659 to 846 (KRQEAIYEVY…RDFMKRIDQA (188 aa)) constitute a DH domain. The 303-residue stretch at 1034-1336 (TNKINSVTSC…RLLQTSTQEI (303 aa)) folds into the CNH domain.

Stimulates the exchange of RHO1 GDP-bound form into GTP-bound form. The polypeptide is RHO1 GDP-GTP exchange protein 2 (ROM2) (Saccharomyces cerevisiae (strain ATCC 204508 / S288c) (Baker's yeast)).